The sequence spans 380 residues: Cytochrome b (380 aa).

Transmembrane regions (helical) follow at residues 33 to 53, 77 to 98, 113 to 133, and 178 to 198; these read FGSLLGLCLITQILTGLFLAM, WLIRNLHANGASFFFICMYLHV, WNIGVILLLLVMMTAFVGYVL, and FFAFHFILPFIVAAAVILHLL. Heme b contacts are provided by His83 and His97. The heme b site is built by His182 and His196. Residue His201 participates in a ubiquinone binding. 4 helical membrane passes run 226 to 246, 288 to 308, 320 to 340, and 347 to 367; these read YKDILGFIVMLLALITLALFS, LGGVLALLFSILVLMIVPILH, FSQFLFWVLVADMLILTWIGG, and FIIIGQIASILYFTLFLLLIP.

The protein belongs to the cytochrome b family. In terms of assembly, the cytochrome bc1 complex contains 3 respiratory subunits (MT-CYB, CYC1 and UQCRFS1), 2 core proteins (UQCRC1 and UQCRC2) and probably 6 low-molecular weight proteins. Requires heme b as cofactor.

The protein localises to the mitochondrion inner membrane. Component of the ubiquinol-cytochrome c reductase complex (complex III or cytochrome b-c1 complex) that is part of the mitochondrial respiratory chain. The b-c1 complex mediates electron transfer from ubiquinol to cytochrome c. Contributes to the generation of a proton gradient across the mitochondrial membrane that is then used for ATP synthesis. In Arapaima gigas (Arapaima), this protein is Cytochrome b (mt-cyb).